The following is a 124-amino-acid chain: uncharacterized protein (124 aa).

This is an uncharacterized protein from Schizosaccharomyces pombe (strain 972 / ATCC 24843) (Fission yeast).